The following is a 122-amino-acid chain: Large ribosomal subunit protein bL12 (122 aa).

A disordered region spans residues Ala96–Thr122. The segment covering Leu104–Thr122 has biased composition (basic and acidic residues).

It belongs to the bacterial ribosomal protein bL12 family. Homodimer. Part of the ribosomal stalk of the 50S ribosomal subunit. Forms a multimeric L10(L12)X complex, where L10 forms an elongated spine to which 2 to 4 L12 dimers bind in a sequential fashion. Binds GTP-bound translation factors.

Forms part of the ribosomal stalk which helps the ribosome interact with GTP-bound translation factors. Is thus essential for accurate translation. This chain is Large ribosomal subunit protein bL12, found in Liberibacter asiaticus (Citrus greening disease).